The chain runs to 571 residues: Kelch-like protein 28 (571 aa).

Residues 35–102 (CDIILRVGDV…AYTGTVFISQ (68 aa)) enclose the BTB domain. Kelch repeat units follow at residues 284-331 (VLCA…VLDQ), 332-386 (KVYV…VLAG), 387-433 (ELYA…VLDG), 435-479 (IYAI…VMLG), 480-526 (FIFV…VIDN), and 528-570 (LYVV…GLTA).

This Homo sapiens (Human) protein is Kelch-like protein 28 (KLHL28).